A 291-amino-acid chain; its full sequence is 33 kDa chaperonin (291 aa).

Intrachain disulfides connect cysteine 237–cysteine 239 and cysteine 270–cysteine 273.

Belongs to the HSP33 family. In terms of processing, under oxidizing conditions two disulfide bonds are formed involving the reactive cysteines. Under reducing conditions zinc is bound to the reactive cysteines and the protein is inactive.

The protein localises to the cytoplasm. Its function is as follows. Redox regulated molecular chaperone. Protects both thermally unfolding and oxidatively damaged proteins from irreversible aggregation. Plays an important role in the bacterial defense system toward oxidative stress. This chain is 33 kDa chaperonin, found in Clostridioides difficile (strain 630) (Peptoclostridium difficile).